Here is a 572-residue protein sequence, read N- to C-terminus: Enolase 4 (572 aa).

A disordered region spans residues 181–204 (IEPVPSPVTSPALGKKKGSGKGKK). Positions 194 to 204 (GKKKGSGKGKK) are enriched in basic residues. Substrate is bound at residue E288. The Proton acceptor role is filled by K468. Residue K519 coordinates substrate.

It belongs to the enolase family.

It carries out the reaction (2R)-2-phosphoglycerate = phosphoenolpyruvate + H2O. It participates in carbohydrate degradation; glycolysis; pyruvate from D-glyceraldehyde 3-phosphate: step 4/5. This chain is Enolase 4 (eno4), found in Xenopus laevis (African clawed frog).